A 940-amino-acid chain; its full sequence is Protein translocase subunit SecA 1 (940 aa).

Residues Gln-83, 101–105 (GEGKT), and Asp-490 each bind ATP. The tract at residues 856-940 (AEQGGTATAA…AKPPKSVKRR (85 aa)) is disordered.

Belongs to the SecA family. As to quaternary structure, monomer and homodimer. Part of the essential Sec protein translocation apparatus which comprises SecA, SecYEG and auxiliary proteins SecDF. Other proteins may also be involved.

It localises to the cell membrane. Its subcellular location is the cytoplasm. It carries out the reaction ATP + H2O + cellular proteinSide 1 = ADP + phosphate + cellular proteinSide 2.. Its function is as follows. Part of the Sec protein translocase complex. Interacts with the SecYEG preprotein conducting channel. Has a central role in coupling the hydrolysis of ATP to the transfer of proteins into and across the cell membrane, serving as an ATP-driven molecular motor driving the stepwise translocation of polypeptide chains across the membrane. This chain is Protein translocase subunit SecA 1, found in Mycolicibacterium paratuberculosis (strain ATCC BAA-968 / K-10) (Mycobacterium paratuberculosis).